A 600-amino-acid chain; its full sequence is Glutamine--fructose-6-phosphate aminotransferase [isomerizing] (600 aa).

The active-site Nucleophile; for GATase activity is cysteine 2. Residues 2-217 (CGIVGYIGTE…DEEIVIVTKD (216 aa)) enclose the Glutamine amidotransferase type-2 domain. SIS domains follow at residues 283-422 (IRQA…AKGI) and 452-590 (IARD…VDKP). The For Fru-6P isomerization activity role is filled by lysine 595.

Homodimer.

The protein resides in the cytoplasm. It carries out the reaction D-fructose 6-phosphate + L-glutamine = D-glucosamine 6-phosphate + L-glutamate. Its function is as follows. Catalyzes the first step in hexosamine metabolism, converting fructose-6P into glucosamine-6P using glutamine as a nitrogen source. This chain is Glutamine--fructose-6-phosphate aminotransferase [isomerizing], found in Halalkalibacterium halodurans (strain ATCC BAA-125 / DSM 18197 / FERM 7344 / JCM 9153 / C-125) (Bacillus halodurans).